The chain runs to 464 residues: Protein FAM90A10 (464 aa).

Disordered regions lie at residues 1 to 42 (MMAR…DPRL), 69 to 373 (VPAT…LPTA), and 415 to 437 (HSPEKPGAFLAQSPHVSEKSEAP). Composition is skewed to basic and acidic residues over residues 74–89 (GKKEGKENLKPWKPRG) and 97–114 (NKDKGEKEERPRQQDPQR). The span at 180–197 (LASLSPLRKASLSSSSSL) shows a compositional bias: low complexity.

It belongs to the FAM90 family.

In Homo sapiens (Human), this protein is Protein FAM90A10 (FAM90A10).